The primary structure comprises 209 residues: MGAILGKKIGMTRLYNDKREAISCTVIQAGPCFVTQVKSAEKDGYDAYQIGIGERDEKKINKPMQGHYRKAGVTPGFMMAEFKKTEFSENLEAGNPVSVESFKEGEKVNVLGVSKGKGFAGVVKRHNFGGGSRTHGQSDRLRAPGSVGGSSDPSRTFRGTRMAGRMGGDNITVKNLEIVKIMPESNLLVIKGAVPGPKNSYVKIVSIKK.

The interval 126–165 is disordered; the sequence is HNFGGGSRTHGQSDRLRAPGSVGGSSDPSRTFRGTRMAGR.

The protein belongs to the universal ribosomal protein uL3 family. As to quaternary structure, part of the 50S ribosomal subunit. Forms a cluster with proteins L14 and L19.

One of the primary rRNA binding proteins, it binds directly near the 3'-end of the 23S rRNA, where it nucleates assembly of the 50S subunit. The chain is Large ribosomal subunit protein uL3 from Chlorobium limicola (strain DSM 245 / NBRC 103803 / 6330).